A 79-amino-acid chain; its full sequence is Schistosomin (79 aa).

In terms of processing, contains four disulfide bonds. Growth-controlling neurosecretory light green cells, in the cerebral ganglia of the CNS.

The protein localises to the secreted. Anti-gonadotropic neuropeptide. It also decreases the binding capacity of calfluxin to membrane-bound receptors of the albumen gland. This leads to inhibition of the reproductive activities of the infected snail. The chain is Schistosomin from Lymnaea stagnalis (Great pond snail).